The primary structure comprises 628 residues: tRNA uridine 5-carboxymethylaminomethyl modification enzyme MnmG (628 aa).

Gly14–Gly19 provides a ligand contact to FAD. Position 274-288 (Gly274–Phe288) interacts with NAD(+).

Belongs to the MnmG family. In terms of assembly, homodimer. Heterotetramer of two MnmE and two MnmG subunits. It depends on FAD as a cofactor.

It localises to the cytoplasm. NAD-binding protein involved in the addition of a carboxymethylaminomethyl (cmnm) group at the wobble position (U34) of certain tRNAs, forming tRNA-cmnm(5)s(2)U34. This is tRNA uridine 5-carboxymethylaminomethyl modification enzyme MnmG from Clostridium kluyveri (strain ATCC 8527 / DSM 555 / NBRC 12016 / NCIMB 10680 / K1).